Here is a 182-residue protein sequence, read N- to C-terminus: Probable tyrosine phosphatase protein H4 (182 aa).

Positions 1 to 182 (MEINKFICSQ…TVLKIQKSKI (182 aa)) constitute a Tyrosine-protein phosphatase domain. Catalysis depends on Cys142, which acts as the Phosphocysteine intermediate.

It belongs to the protein-tyrosine phosphatase family.

It catalyses the reaction O-phospho-L-tyrosyl-[protein] + H2O = L-tyrosyl-[protein] + phosphate. This is Probable tyrosine phosphatase protein H4 (H5) from Microplitis demolitor (Parasitoid wasp).